The chain runs to 767 residues: Serine/threonine-protein kinase DCLK2 (767 aa).

The segment at 1-44 (MASTRSIELEHFEERDKRPRPGSRRGAPSSSGGSSISGPKGNGL) is disordered. The span at 7–19 (IELEHFEERDKRP) shows a compositional bias: basic and acidic residues. Residues 24–43 (RRGAPSSSGGSSISGPKGNG) show a composition bias toward low complexity. Thr-61 bears the Phosphothreonine mark. Doublecortin domains follow at residues 72–158 (KKAR…VDYT) and 196–279 (KLVT…AQDD). Over residues 301 to 311 (KYSGSRSPGLS) the composition is skewed to low complexity. The interval 301 to 391 (KYSGSRSPGL…GPELDRCMSP (91 aa)) is disordered. Positions 327 to 338 (SAYSTAKSPVNG) are enriched in polar residues. The span at 339-362 (TPSSQLSTPKSTKSSSSSPTSPGS) shows a compositional bias: low complexity. The segment covering 369–380 (ISAQGRSSSNVN) has biased composition (polar residues). Phosphoserine is present on Ser-377. Residues 409–666 (YRIGKVIGDG…AGEILSHPWV (258 aa)) enclose the Protein kinase domain. ATP contacts are provided by residues 415-423 (IGDGNFAVV) and Lys-438. Residue Asp-530 is the Proton acceptor of the active site. Residue Ser-662 is modified to Phosphoserine. Thr-681 carries the phosphothreonine modification. Residues 721–734 (HCRDSSKSSREQTS) are compositionally biased toward basic and acidic residues. Positions 721–767 (HCRDSSKSSREQTSAREAPPPPESPRPPGPPATSGCDPAGTWRRHRD) are disordered. Pro residues predominate over residues 738 to 751 (APPPPESPRPPGPP).

Belongs to the protein kinase superfamily. CAMK Ser/Thr protein kinase family. CaMK subfamily. Interacts with MAPK8IP1/JIP-1, MAPK8IP2/JIP-2, MAPK9/JNK2, PPP1R9B/NEURABIN-2 and actin. Binds to and stabilizes microtubules; binding affinity is strongly reduced by autophosphorylation. In terms of processing, autophosphorylated.

The protein resides in the cytoplasm. The protein localises to the cytoskeleton. It carries out the reaction L-seryl-[protein] + ATP = O-phospho-L-seryl-[protein] + ADP + H(+). It catalyses the reaction L-threonyl-[protein] + ATP = O-phospho-L-threonyl-[protein] + ADP + H(+). In terms of biological role, protein kinase with a significantly reduced Ca(2+)+/CAM affinity and dependence compared to other members of the CaMK family. May play a role in the down-regulation of CRE-dependent gene activation probably by phosphorylation of the CREB coactivator CRTC2/TORC2 and the resulting retention of TORC2 in the cytoplasm. The protein is Serine/threonine-protein kinase DCLK2 (Dclk2) of Rattus norvegicus (Rat).